A 215-amino-acid polypeptide reads, in one-letter code: Putative O-methyltransferase MAB_1361c (215 aa).

S-adenosyl-L-methionine-binding positions include V42, E64, 66–67, S72, D90, and V91; that span reads GT. Substrate is bound at residue D138.

It belongs to the class I-like SAM-binding methyltransferase superfamily. Cation-dependent O-methyltransferase family.

The sequence is that of Putative O-methyltransferase MAB_1361c from Mycobacteroides abscessus (strain ATCC 19977 / DSM 44196 / CCUG 20993 / CIP 104536 / JCM 13569 / NCTC 13031 / TMC 1543 / L948) (Mycobacterium abscessus).